An 87-amino-acid polypeptide reads, in one-letter code: Neurotoxin LmNaTx64.1 (87 aa).

The N-terminal stretch at 1–18 (MKILFLIILTAFFIGVHC) is a signal peptide. One can recognise an LCN-type CS-alpha/beta domain in the interval 19–85 (KHGYPIIRAG…TWSRATNKCK (67 aa)). 4 disulfide bridges follow: Cys-33–Cys-84, Cys-37–Cys-58, Cys-44–Cys-65, and Cys-48–Cys-67. At Cys-84 the chain carries Cysteine amide.

It belongs to the long (4 C-C) scorpion toxin superfamily. Sodium channel inhibitor family. Beta subfamily. As to expression, expressed by the venom gland.

The protein localises to the secreted. Functionally, binds voltage-independently at site-4 of sodium channels (Nav) and shift the voltage of activation toward more negative potentials thereby affecting sodium channel activation and promoting spontaneous and repetitive firing. This is Neurotoxin LmNaTx64.1 from Lychas mucronatus (Chinese swimming scorpion).